A 255-amino-acid chain; its full sequence is Glycerol-3-phosphate regulon repressor (255 aa).

The 56-residue stretch at 3–58 folds into the HTH deoR-type domain; sequence QSLRHQKIIKLVEQSGYLSTEELVAALDVSPQTIRRDLNILAELDLIRRHHGGAAS. The H-T-H motif DNA-binding region spans 20 to 39; it reads LSTEELVAALDVSPQTIRRD.

In terms of biological role, repressor of the glycerol-3-phosphate regulon. This chain is Glycerol-3-phosphate regulon repressor (glpR), found in Haemophilus influenzae (strain ATCC 51907 / DSM 11121 / KW20 / Rd).